The sequence spans 907 residues: Interference hedgehog (907 aa).

Positions 1-23 are cleaved as a signal peptide; sequence MSLTRRFSLTLLLLLPLLTSLLA. Residues 24 to 709 are Extracellular-facing; the sequence is AIPVLQANLS…SHNETFNMNP (686 aa). Ig-like C2-type domains lie at 42 to 149, 152 to 233, 252 to 340, and 346 to 433; these read PGVR…ASIS, GADT…VRLA, PALL…FIEL, and PRIL…LQVN. 3 disulfide bridges follow: Cys-65/Cys-127, Cys-173/Cys-221, and Cys-276/Cys-324. Residues Asn-101, Asn-203, Asn-300, and Asn-355 are each glycosylated (N-linked (GlcNAc...) asparagine). Cys-367 and Cys-415 are oxidised to a cystine. Residues 427 to 474 are disordered; it reads GTLLQVNPKQLPDGEGTGMDSGRSSARPTHSRKQKQQTQMVPPSAPNV. Positions 462 to 474 are enriched in polar residues; the sequence is QQTQMVPPSAPNV. 2 Fibronectin type-III domains span residues 468-578 and 586-681; these read PPSA…LQRG and VPEL…TQRP. Asn-473 is a glycosylation site (N-linked (GlcNAc...) asparagine). Heparin is bound by residues Arg-504, Lys-511, and Lys-513. 2 N-linked (GlcNAc...) asparagine glycosylation sites follow: Asn-537 and Asn-548. Arg-552 contributes to the heparin binding site. A glycan (N-linked (GlcNAc...) asparagine) is linked at Asn-568. The span at 676-688 shows a compositional bias: polar residues; the sequence is GRTQRPRASSTPQ. A disordered region spans residues 676–701; the sequence is GRTQRPRASSTPQPVLHAVDTTTPSH. The N-linked (GlcNAc...) asparagine glycan is linked to Asn-702. Residues 710 to 730 form a helical membrane-spanning segment; that stretch reads MLTGTIGGGALLVLLVISACL. Residues 731–907 lie on the Cytoplasmic side of the membrane; sequence CLCRRRSSRG…SSGSLNSVGV (177 aa). Disordered stretches follow at residues 780 to 805 and 829 to 881; these read AQQQ…QDND and MSSS…NKPG. 2 stretches are compositionally biased toward low complexity: residues 781-794 and 853-863; these read QQQQ…LQQQ and NNNNLNQPGDG. Over residues 865 to 878 the composition is skewed to polar residues; that stretch reads LANSADSPRLQASN.

This sequence belongs to the immunoglobulin superfamily. IHOG family. In terms of assembly, homodimer. Heterotetramer; 2 iHog chains bind 2 hh chains when facilitated by heparin, heparin is required to promote high-affinity interactions between hh and iHog.

The protein resides in the membrane. Mediates response to the active Hedgehog (Hh) protein signal in embryos, functioning upstream or at the level of patched (ptc). In Drosophila virilis (Fruit fly), this protein is Interference hedgehog.